The following is a 185-amino-acid chain: Signal peptidase I (185 aa).

Residues 1–20 (MKSEKEKTSKKSAVLDWAKA) lie on the Cytoplasmic side of the membrane. Residues 21 to 41 (IIIAVVLAVLIRNFLFAPYVV) traverse the membrane as a helical segment. Residues 42-185 (DGESMEPTLH…FPFNEIRKTK (144 aa)) lie on the Extracellular side of the membrane. Catalysis depends on residues serine 45 and lysine 85.

This sequence belongs to the peptidase S26 family.

The protein localises to the cell membrane. The catalysed reaction is Cleavage of hydrophobic, N-terminal signal or leader sequences from secreted and periplasmic proteins.. This Bacillus amyloliquefaciens (Bacillus velezensis) protein is Signal peptidase I (sipA).